Here is a 269-residue protein sequence, read N- to C-terminus: Formamidopyrimidine-DNA glycosylase (269 aa).

Pro-2 acts as the Schiff-base intermediate with DNA in catalysis. Residue Glu-3 is the Proton donor of the active site. The active-site Proton donor; for beta-elimination activity is the Lys-58. Residues His-91, Arg-110, and Lys-150 each coordinate DNA. The FPG-type zinc finger occupies 235–269 (SVYGCENKTCHFCKSKIIKIVQNQRSTFYCRKCQT). The active-site Proton donor; for delta-elimination activity is the Arg-259.

The protein belongs to the FPG family. In terms of assembly, monomer. Requires Zn(2+) as cofactor.

It catalyses the reaction Hydrolysis of DNA containing ring-opened 7-methylguanine residues, releasing 2,6-diamino-4-hydroxy-5-(N-methyl)formamidopyrimidine.. The enzyme catalyses 2'-deoxyribonucleotide-(2'-deoxyribose 5'-phosphate)-2'-deoxyribonucleotide-DNA = a 3'-end 2'-deoxyribonucleotide-(2,3-dehydro-2,3-deoxyribose 5'-phosphate)-DNA + a 5'-end 5'-phospho-2'-deoxyribonucleoside-DNA + H(+). Involved in base excision repair of DNA damaged by oxidation or by mutagenic agents. Acts as a DNA glycosylase that recognizes and removes damaged bases. Has a preference for oxidized purines, such as 7,8-dihydro-8-oxoguanine (8-oxoG). Has AP (apurinic/apyrimidinic) lyase activity and introduces nicks in the DNA strand. Cleaves the DNA backbone by beta-delta elimination to generate a single-strand break at the site of the removed base with both 3'- and 5'-phosphates. The polypeptide is Formamidopyrimidine-DNA glycosylase (Ruthia magnifica subsp. Calyptogena magnifica).